Here is a 330-residue protein sequence, read N- to C-terminus: DNA-directed RNA polymerase subunit alpha (330 aa).

The segment at 1–237 is alpha N-terminal domain (alpha-NTD); it reads MYTEINEMLT…RQLHAFVDMK (237 aa). The interval 251 to 330 is alpha C-terminal domain (alpha-CTD); it reads FDPVLLRSVD…ENWPPASLGE (80 aa).

This sequence belongs to the RNA polymerase alpha chain family. In terms of assembly, homodimer. The RNAP catalytic core consists of 2 alpha, 1 beta, 1 beta' and 1 omega subunit. When a sigma factor is associated with the core the holoenzyme is formed, which can initiate transcription.

The catalysed reaction is RNA(n) + a ribonucleoside 5'-triphosphate = RNA(n+1) + diphosphate. In terms of biological role, DNA-dependent RNA polymerase catalyzes the transcription of DNA into RNA using the four ribonucleoside triphosphates as substrates. The polypeptide is DNA-directed RNA polymerase subunit alpha (Legionella pneumophila subsp. pneumophila (strain Philadelphia 1 / ATCC 33152 / DSM 7513)).